The primary structure comprises 91 residues: MMERYLIKVLGRVQGVGFRYFAQSLAGTYSITGTVKNCEDATVRIEAQGEEKNLNKFLAEIRKGNRFVKVEDIVAKKIPTADNEKSFKIVY.

An Acylphosphatase-like domain is found at 4-91; that stretch reads RYLIKVLGRV…DNEKSFKIVY (88 aa). Residues arginine 19 and asparagine 37 contribute to the active site.

It belongs to the acylphosphatase family.

The catalysed reaction is an acyl phosphate + H2O = a carboxylate + phosphate + H(+). The protein is Acylphosphatase (acyP) of Clostridium acetobutylicum (strain ATCC 824 / DSM 792 / JCM 1419 / IAM 19013 / LMG 5710 / NBRC 13948 / NRRL B-527 / VKM B-1787 / 2291 / W).